The primary structure comprises 421 residues: MFNRDMNIADYDPELWQSITDEVQRQEDHIELIASENYTSPRVMEAQGSQLTNKYAEGYPGKRYYGGCEYVDVAESLAIERAKSLFGADYANVQPHSGSQANAAVYQALCAPGDTILGMSLAHGGHLTHGSHVSFSGKMYNAVQYGITPETGILDYAEIERLAVEHKPTMIIAGFSAYSGIVDWAKFREIADKVGAYLFVDMAHVAGLVAAGLYPNPVPFADVVTTTTHKTLGGPRGGLILAKANEAIEKKLNSAVFPGQQGGPLMHVIAAKAVAFKECAEPEFAVYQQQVLDNAKAMVKSFLARGYKIVSGGTENHLFLVDLIAQDITGKEADAALGNAHITVNKNSVPNDPRSPFVTSGLRIGTPALARRGVNAQQSAELALWMCDVLDAIKDEAKLATTITAVKVKVAALCKACPVYG.

(6S)-5,6,7,8-tetrahydrofolate-binding positions include L121 and 125–127 (GHL). K230 is modified (N6-(pyridoxal phosphate)lysine). 355 to 357 (SPF) lines the (6S)-5,6,7,8-tetrahydrofolate pocket.

It belongs to the SHMT family. Homodimer. Requires pyridoxal 5'-phosphate as cofactor.

The protein resides in the cytoplasm. It carries out the reaction (6R)-5,10-methylene-5,6,7,8-tetrahydrofolate + glycine + H2O = (6S)-5,6,7,8-tetrahydrofolate + L-serine. It participates in one-carbon metabolism; tetrahydrofolate interconversion. The protein operates within amino-acid biosynthesis; glycine biosynthesis; glycine from L-serine: step 1/1. Catalyzes the reversible interconversion of serine and glycine with tetrahydrofolate (THF) serving as the one-carbon carrier. This reaction serves as the major source of one-carbon groups required for the biosynthesis of purines, thymidylate, methionine, and other important biomolecules. Also exhibits THF-independent aldolase activity toward beta-hydroxyamino acids, producing glycine and aldehydes, via a retro-aldol mechanism. The protein is Serine hydroxymethyltransferase of Psychromonas ingrahamii (strain DSM 17664 / CCUG 51855 / 37).